The primary structure comprises 293 residues: Ribosomal protein L11 methyltransferase (293 aa).

The S-adenosyl-L-methionine site is built by T145, G166, D188, and N230.

It belongs to the methyltransferase superfamily. PrmA family.

The protein localises to the cytoplasm. The catalysed reaction is L-lysyl-[protein] + 3 S-adenosyl-L-methionine = N(6),N(6),N(6)-trimethyl-L-lysyl-[protein] + 3 S-adenosyl-L-homocysteine + 3 H(+). In terms of biological role, methylates ribosomal protein L11. The chain is Ribosomal protein L11 methyltransferase from Escherichia coli (strain 55989 / EAEC).